The chain runs to 335 residues: MNLINEKLNNLENNAAKSPKEAVVLLNMGGPNSLYEVGVFLKNMFDDPFILTIKNNFMRKMVGKMIVNSRIEKSKKIYEKLGGKSPLTPITFALTERLNELDPSRFYTYAMRYTPPYASMVLQDLALKEVESLVFFSMYPQYSSTTTLSSFNDAFNALKSLETFRPKVRVIERFYADKKLNEIILNTILSALNNRKSQDFVLIFSVHGLPKSIVDAGDTYQQECEHHVSLLKELMQQKNIPFKEVLLSYQSKLGPMKWLEPSTEELIEKHRKSHVIIYPLAFTIDNSETLYELDMQYRLMAERLAIKEYLVCPCLNDSIEFAKFIIGLVENLKSE.

Positions 207 and 288 each coordinate Fe cation.

It belongs to the ferrochelatase family.

It localises to the cytoplasm. It carries out the reaction heme b + 2 H(+) = protoporphyrin IX + Fe(2+). It functions in the pathway porphyrin-containing compound metabolism; protoheme biosynthesis; protoheme from protoporphyrin-IX: step 1/1. Catalyzes the ferrous insertion into protoporphyrin IX. The polypeptide is Ferrochelatase (Helicobacter pylori (strain G27)).